Reading from the N-terminus, the 269-residue chain is Ribosomal RNA small subunit methyltransferase A (269 aa).

S-adenosyl-L-methionine is bound by residues Asn-18, Leu-20, Gly-45, Glu-66, Asp-91, and Asn-112.

Belongs to the class I-like SAM-binding methyltransferase superfamily. rRNA adenine N(6)-methyltransferase family. RsmA subfamily.

The protein resides in the cytoplasm. It carries out the reaction adenosine(1518)/adenosine(1519) in 16S rRNA + 4 S-adenosyl-L-methionine = N(6)-dimethyladenosine(1518)/N(6)-dimethyladenosine(1519) in 16S rRNA + 4 S-adenosyl-L-homocysteine + 4 H(+). In terms of biological role, specifically dimethylates two adjacent adenosines (A1518 and A1519) in the loop of a conserved hairpin near the 3'-end of 16S rRNA in the 30S particle. May play a critical role in biogenesis of 30S subunits. This is Ribosomal RNA small subunit methyltransferase A from Shewanella loihica (strain ATCC BAA-1088 / PV-4).